A 397-amino-acid polypeptide reads, in one-letter code: Tryptophan synthase beta chain (397 aa).

K87 carries the N6-(pyridoxal phosphate)lysine modification.

It belongs to the TrpB family. In terms of assembly, tetramer of two alpha and two beta chains. The cofactor is pyridoxal 5'-phosphate.

The enzyme catalyses (1S,2R)-1-C-(indol-3-yl)glycerol 3-phosphate + L-serine = D-glyceraldehyde 3-phosphate + L-tryptophan + H2O. Its pathway is amino-acid biosynthesis; L-tryptophan biosynthesis; L-tryptophan from chorismate: step 5/5. Functionally, the beta subunit is responsible for the synthesis of L-tryptophan from indole and L-serine. The sequence is that of Tryptophan synthase beta chain from Escherichia coli O157:H7.